A 185-amino-acid chain; its full sequence is Ribosome-recycling factor (185 aa).

Belongs to the RRF family.

It localises to the cytoplasm. Its function is as follows. Responsible for the release of ribosomes from messenger RNA at the termination of protein biosynthesis. May increase the efficiency of translation by recycling ribosomes from one round of translation to another. This chain is Ribosome-recycling factor, found in Vibrio campbellii (strain ATCC BAA-1116).